The chain runs to 539 residues: T-complex protein 1 subunit zeta (539 aa).

The protein belongs to the TCP-1 chaperonin family. Heterooligomeric complex of about 850 to 900 kDa that forms two stacked rings, 12 to 16 nm in diameter.

It localises to the cytoplasm. Its function is as follows. Molecular chaperone; assists the folding of proteins upon ATP hydrolysis. Known to play a role, in vitro, in the folding of actin and tubulin. This Dictyostelium discoideum (Social amoeba) protein is T-complex protein 1 subunit zeta (cct6).